The chain runs to 252 residues: Triosephosphate isomerase (252 aa).

9-11 (NWK) contacts substrate. His100 serves as the catalytic Electrophile. Glu171 serves as the catalytic Proton acceptor. Substrate contacts are provided by residues Gly177, Ser216, and 237-238 (GG).

The protein belongs to the triosephosphate isomerase family. Homodimer.

It is found in the cytoplasm. It carries out the reaction D-glyceraldehyde 3-phosphate = dihydroxyacetone phosphate. It participates in carbohydrate biosynthesis; gluconeogenesis. Its pathway is carbohydrate degradation; glycolysis; D-glyceraldehyde 3-phosphate from glycerone phosphate: step 1/1. Involved in the gluconeogenesis. Catalyzes stereospecifically the conversion of dihydroxyacetone phosphate (DHAP) to D-glyceraldehyde-3-phosphate (G3P). This is Triosephosphate isomerase from Polynucleobacter asymbioticus (strain DSM 18221 / CIP 109841 / QLW-P1DMWA-1) (Polynucleobacter necessarius subsp. asymbioticus).